Reading from the N-terminus, the 199-residue chain is GTP cyclohydrolase-2 (199 aa).

52–56 (RMHSE) provides a ligand contact to GTP. Zn(2+) is bound by residues Cys-57, Cys-68, and Cys-70. GTP contacts are provided by residues Gln-73, 94–96 (EGR), and Thr-116. Asp-128 acts as the Proton acceptor in catalysis. The active-site Nucleophile is the Arg-130. Positions 151 and 156 each coordinate GTP.

The protein belongs to the GTP cyclohydrolase II family. It depends on Zn(2+) as a cofactor.

The enzyme catalyses GTP + 4 H2O = 2,5-diamino-6-hydroxy-4-(5-phosphoribosylamino)-pyrimidine + formate + 2 phosphate + 3 H(+). The protein operates within cofactor biosynthesis; riboflavin biosynthesis; 5-amino-6-(D-ribitylamino)uracil from GTP: step 1/4. Its function is as follows. Catalyzes the conversion of GTP to 2,5-diamino-6-ribosylamino-4(3H)-pyrimidinone 5'-phosphate (DARP), formate and pyrophosphate. The sequence is that of GTP cyclohydrolase-2 from Aliivibrio fischeri (strain MJ11) (Vibrio fischeri).